A 340-amino-acid chain; its full sequence is Uroporphyrinogen decarboxylase (340 aa).

Substrate-binding positions include 21-25, aspartate 71, tyrosine 148, serine 203, and histidine 316; that span reads RQAGR.

It belongs to the uroporphyrinogen decarboxylase family. In terms of assembly, homodimer.

The protein resides in the cytoplasm. The catalysed reaction is uroporphyrinogen III + 4 H(+) = coproporphyrinogen III + 4 CO2. The protein operates within porphyrin-containing compound metabolism; protoporphyrin-IX biosynthesis; coproporphyrinogen-III from 5-aminolevulinate: step 4/4. Catalyzes the decarboxylation of four acetate groups of uroporphyrinogen-III to yield coproporphyrinogen-III. This is Uroporphyrinogen decarboxylase from Campylobacter jejuni subsp. jejuni serotype O:23/36 (strain 81-176).